The primary structure comprises 221 residues: Protein-L-isoaspartate O-methyltransferase (221 aa).

Residue S60 is part of the active site.

It belongs to the methyltransferase superfamily. L-isoaspartyl/D-aspartyl protein methyltransferase family.

Its subcellular location is the cytoplasm. It carries out the reaction [protein]-L-isoaspartate + S-adenosyl-L-methionine = [protein]-L-isoaspartate alpha-methyl ester + S-adenosyl-L-homocysteine. Catalyzes the methyl esterification of L-isoaspartyl residues in peptides and proteins that result from spontaneous decomposition of normal L-aspartyl and L-asparaginyl residues. It plays a role in the repair and/or degradation of damaged proteins. The sequence is that of Protein-L-isoaspartate O-methyltransferase from Rhodospirillum centenum (strain ATCC 51521 / SW).